We begin with the raw amino-acid sequence, 312 residues long: Acetaldehyde dehydrogenase (312 aa).

11 to 14 (SGNI) contacts NAD(+). The active-site Acyl-thioester intermediate is the Cys129. NAD(+) is bound by residues 160–168 (SAGPGTRAN) and Asn287.

This sequence belongs to the acetaldehyde dehydrogenase family.

The enzyme catalyses acetaldehyde + NAD(+) + CoA = acetyl-CoA + NADH + H(+). In Sphingobium yanoikuyae (Sphingomonas yanoikuyae), this protein is Acetaldehyde dehydrogenase (xylQ).